Here is a 608-residue protein sequence, read N- to C-terminus: Elongation factor 4 (608 aa).

The tr-type G domain occupies 11-193 (SKIRNFSIIA…QIVEKVPAPD (183 aa)). GTP contacts are provided by residues 23–28 (DHGKST) and 140–143 (NKID).

It belongs to the TRAFAC class translation factor GTPase superfamily. Classic translation factor GTPase family. LepA subfamily.

The protein localises to the cell membrane. The catalysed reaction is GTP + H2O = GDP + phosphate + H(+). Required for accurate and efficient protein synthesis under certain stress conditions. May act as a fidelity factor of the translation reaction, by catalyzing a one-codon backward translocation of tRNAs on improperly translocated ribosomes. Back-translocation proceeds from a post-translocation (POST) complex to a pre-translocation (PRE) complex, thus giving elongation factor G a second chance to translocate the tRNAs correctly. Binds to ribosomes in a GTP-dependent manner. This is Elongation factor 4 from Bacillus cytotoxicus (strain DSM 22905 / CIP 110041 / 391-98 / NVH 391-98).